We begin with the raw amino-acid sequence, 297 residues long: DNA excision repair protein ERCC-1 (297 aa).

An N-acetylmethionine modification is found at methionine 1. A disordered region spans residues 1 to 39 (MDPGKDKEGVPQPSGPPARKKFVIPLDEDEVPPGVAKPL). The short motif at 17–23 (PARKKFV) is the Nuclear localization signal element. Residues lysine 21 and lysine 37 each participate in a glycyl lysine isopeptide (Lys-Gly) (interchain with G-Cter in SUMO2) cross-link. Residues 134–156 (QSTCALFLSLRYHNLHPDYIHGR) mediate DNA binding. The tract at residues 220–297 (ADLLMEKLEQ…VLHEPFLKVP (78 aa)) is hhH2, dimerization with ERCC4/XPF. Lysine 243 is covalently cross-linked (Glycyl lysine isopeptide (Lys-Gly) (interchain with G-Cter in SUMO2)).

Belongs to the ERCC1/RAD10/SWI10 family. Heterodimer composed of ERCC1 isoform 1 and ERCC4/XPF. Interacts with USP45. In terms of assembly, does not interact with ERCC4/XPF. Ubiquitinated with both 'Lys-48' and 'Lys-63' linkages. Deubiquitinated by USP45.

Its subcellular location is the nucleus. The protein resides in the cytoplasm. Non-catalytic component of a structure-specific DNA repair endonuclease responsible for the 5'-incision during DNA repair. Responsible, in conjunction with SLX4, for the first step in the repair of interstrand cross-links (ICL). Participates in the processing of anaphase bridge-generating DNA structures, which consist in incompletely processed DNA lesions arising during S or G2 phase, and can result in cytokinesis failure. Also required for homology-directed repair (HDR) of DNA double-strand breaks, in conjunction with SLX4. Functionally, not functional in the nucleotide excision repair pathway. The polypeptide is DNA excision repair protein ERCC-1 (ERCC1) (Homo sapiens (Human)).